A 757-amino-acid chain; its full sequence is Double zinc ribbon and ankyrin repeat-containing protein 1 (757 aa).

2 DZANK-type zinc fingers span residues 230–290 (CAHC…VVCE) and 359–407 (CSRC…GSCG). ANK repeat units follow at residues 631-662 (ENRL…DPNC) and 666-695 (QGRP…DIDQ).

As to quaternary structure, interacts with NINL. Associates with DYNC1H1 and multiple dynein intermediate and light chains as well as actin-binding proteins. In terms of tissue distribution, expressed in retina.

It is found in the cell projection. The protein resides in the cilium. Functionally, involved in vesicle transport in photoreceptor cells. This Rattus norvegicus (Rat) protein is Double zinc ribbon and ankyrin repeat-containing protein 1.